A 546-amino-acid chain; its full sequence is Chaperonin GroEL (546 aa).

ATP is bound by residues 30-33 (TLGP), Lys-51, 87-91 (DGTTT), Gly-415, 479-481 (NAA), and Asp-495.

This sequence belongs to the chaperonin (HSP60) family. As to quaternary structure, forms a cylinder of 14 subunits composed of two heptameric rings stacked back-to-back. Interacts with the co-chaperonin GroES.

It localises to the cytoplasm. It catalyses the reaction ATP + H2O + a folded polypeptide = ADP + phosphate + an unfolded polypeptide.. Together with its co-chaperonin GroES, plays an essential role in assisting protein folding. The GroEL-GroES system forms a nano-cage that allows encapsulation of the non-native substrate proteins and provides a physical environment optimized to promote and accelerate protein folding. The sequence is that of Chaperonin GroEL from Allochromatium vinosum (Chromatium vinosum).